A 1012-amino-acid polypeptide reads, in one-letter code: AP-2 complex subunit alpha-1 (1012 aa).

HEAT repeat units lie at residues 254–289 (AMRA…VVKN), 354–391 (DIIK…VSNA), 393–430 (DIVE…DLSW), and 525–565 (PTIP…CIDV). The disordered stretch occupies residues 652-678 (STDPESVARSLSHPNGTLSNIDPQTPS). The span at 663-675 (SHPNGTLSNIDPQ) shows a compositional bias: polar residues. The 100-residue stretch at 742-841 (ALCLKDSGVL…LDFSYKFGAN (100 aa)) folds into the GAE domain.

The protein belongs to the adaptor complexes large subunit family. As to quaternary structure, adaptor protein complex 2 (AP-2) is a heterotetramer composed of two large adaptins (alpha-type and beta-type subunits), a medium adaptin (mu-type subunit) and a small adaptin (sigma-type subunit). Binds to EPSIN2.

It localises to the membrane. It is found in the coated pit. Its function is as follows. Subunit of the adaptor protein complex 2 (AP-2). Adaptor protein complexes function in protein transport via transport vesicles in different membrane traffic pathways. Adaptor protein complexes are vesicle coat components and appear to be involved in cargo selection and vesicle formation. AP-2 is involved in clathrin-dependent endocytosis in which cargo proteins are incorporated into vesicles surrounded by clathrin (clathrin-coated vesicles, CCVs) which are destined for fusion with the early endosome. The complex binds polyphosphoinositides. In Arabidopsis thaliana (Mouse-ear cress), this protein is AP-2 complex subunit alpha-1 (ALPHA-ADR).